The chain runs to 165 residues: Lipoprotein signal peptidase (165 aa).

3 helical membrane-spanning segments follow: residues 9–29, 69–89, and 100–120; these read LLTI…VLLY, KYFL…FLFL, and FSLI…FFYN. Catalysis depends on residues aspartate 124 and aspartate 142. A helical membrane pass occupies residues 133–153; that stretch reads WSFPTFNFADIFISLGTLIFV.

It belongs to the peptidase A8 family.

It is found in the cell inner membrane. The enzyme catalyses Release of signal peptides from bacterial membrane prolipoproteins. Hydrolyzes -Xaa-Yaa-Zaa-|-(S,diacylglyceryl)Cys-, in which Xaa is hydrophobic (preferably Leu), and Yaa (Ala or Ser) and Zaa (Gly or Ala) have small, neutral side chains.. It participates in protein modification; lipoprotein biosynthesis (signal peptide cleavage). Functionally, this protein specifically catalyzes the removal of signal peptides from prolipoproteins. The chain is Lipoprotein signal peptidase from Chlamydia felis (strain Fe/C-56) (Chlamydophila felis).